The following is a 403-amino-acid chain: Ribosomal RNA large subunit methyltransferase I (403 aa).

Positions 9–88 (YPRLVLSKGR…ESIDIAFFTR (80 aa)) constitute a PUA domain.

The protein belongs to the methyltransferase superfamily. RlmI family.

It is found in the cytoplasm. The catalysed reaction is cytidine(1962) in 23S rRNA + S-adenosyl-L-methionine = 5-methylcytidine(1962) in 23S rRNA + S-adenosyl-L-homocysteine + H(+). Functionally, specifically methylates the cytosine at position 1962 (m5C1962) of 23S rRNA. The polypeptide is Ribosomal RNA large subunit methyltransferase I (Salmonella enteritidis PT4 (strain P125109)).